Reading from the N-terminus, the 285-residue chain is Nucleotide-binding protein Pmen_0867 (285 aa).

ATP is bound at residue 8–15 (GRSGSGKS). 60–63 (DARN) provides a ligand contact to GTP.

This sequence belongs to the RapZ-like family.

In terms of biological role, displays ATPase and GTPase activities. The chain is Nucleotide-binding protein Pmen_0867 from Ectopseudomonas mendocina (strain ymp) (Pseudomonas mendocina).